We begin with the raw amino-acid sequence, 1413 residues long: DNA-directed RNA polymerase subunit beta' (1413 aa).

Zn(2+) contacts are provided by Cys70, Cys72, Cys85, and Cys88. Residues Asp460, Asp462, and Asp464 each contribute to the Mg(2+) site. The Zn(2+) site is built by Cys819, Cys893, Cys900, and Cys903. The tract at residues 1393–1413 is disordered; that stretch reads EAFEFGTPETPAAEQTPHTNE.

Belongs to the RNA polymerase beta' chain family. The RNAP catalytic core consists of 2 alpha, 1 beta, 1 beta' and 1 omega subunit. When a sigma factor is associated with the core the holoenzyme is formed, which can initiate transcription. Mg(2+) serves as cofactor. It depends on Zn(2+) as a cofactor.

It catalyses the reaction RNA(n) + a ribonucleoside 5'-triphosphate = RNA(n+1) + diphosphate. Its function is as follows. DNA-dependent RNA polymerase catalyzes the transcription of DNA into RNA using the four ribonucleoside triphosphates as substrates. The polypeptide is DNA-directed RNA polymerase subunit beta' (Paraburkholderia phymatum (strain DSM 17167 / CIP 108236 / LMG 21445 / STM815) (Burkholderia phymatum)).